We begin with the raw amino-acid sequence, 343 residues long: Uroporphyrinogen decarboxylase (343 aa).

Substrate-binding positions include 23–27 (RQAGR), D73, Y151, S206, and H319.

Belongs to the uroporphyrinogen decarboxylase family. Homodimer.

The protein localises to the cytoplasm. It catalyses the reaction uroporphyrinogen III + 4 H(+) = coproporphyrinogen III + 4 CO2. It participates in porphyrin-containing compound metabolism; protoporphyrin-IX biosynthesis; coproporphyrinogen-III from 5-aminolevulinate: step 4/4. Functionally, catalyzes the decarboxylation of four acetate groups of uroporphyrinogen-III to yield coproporphyrinogen-III. The sequence is that of Uroporphyrinogen decarboxylase from Sulfurimonas denitrificans (strain ATCC 33889 / DSM 1251) (Thiomicrospira denitrificans (strain ATCC 33889 / DSM 1251)).